Consider the following 311-residue polypeptide: CD-NTase-associated protein 12 (311 aa).

In terms of domain architecture, TIR spans 4–121; sequence RIFIGSSKEG…LLGITVPQFE (118 aa). Residues 157–311 form an STING domain region; the sequence is STVLAIGYFY…RNIVKIIQEE (155 aa). 3',3'-c-di-GMP contacts are provided by F168, P232, and D249.

It in the C-terminal section; belongs to the bacterial STING family. Forms homodimers; in the presence of c-di-GMP forms filaments with an ordered array of parallel-stacked subunits.

The enzyme catalyses NAD(+) + H2O = ADP-D-ribose + nicotinamide + H(+). Its activity is regulated as follows. NAD(+) hydrolase activity is strongly stimulated by c-di-GMP, weakly by 3'3'-cGAMP, very weakly by c-di-AMP but not at all by 2'3'-cGAMP. Self-association of TIR domains is required for NADase activity. Functionally, effector protein of a CBASS antiviral system with NAD(+) hydrolase activity. CBASS (cyclic oligonucleotide-based antiphage signaling system) provides immunity against bacteriophage. The CD-NTase protein synthesizes cyclic nucleotides in response to infection; these serve as specific second messenger signals. The signals activate a diverse range of effectors, leading to bacterial cell death and thus abortive phage infection. A type I-D CBASS(GG) system. Binds c-di-GMP, does not bind cUMP-AMP. Upon activation by c-di-GMP forms filaments which hydrolyze NAD(+); filament formation is required for enzyme activation. This Flavobacterium daejeonense protein is CD-NTase-associated protein 12.